The chain runs to 313 residues: Protein FixB (313 aa).

An FAD-binding site is contributed by 255–283 (LYLAVGISGQIQHMVGANASQTIFAINKD).

Belongs to the ETF alpha-subunit/FixB family. In terms of assembly, heterodimer of FixA and FixB.

Its pathway is amine and polyamine metabolism; carnitine metabolism. Required for anaerobic carnitine reduction. May bring reductant to CaiA. In Escherichia coli O81 (strain ED1a), this protein is Protein FixB.